Consider the following 589-residue polypeptide: Arginine--tRNA ligase (589 aa).

The 'HIGH' region motif lies at 131–141; the sequence is ANPTGPLHVGH.

This sequence belongs to the class-I aminoacyl-tRNA synthetase family. As to quaternary structure, monomer.

It localises to the cytoplasm. It carries out the reaction tRNA(Arg) + L-arginine + ATP = L-arginyl-tRNA(Arg) + AMP + diphosphate. This is Arginine--tRNA ligase from Legionella pneumophila (strain Paris).